A 476-amino-acid chain; its full sequence is Cysteine--tRNA ligase (476 aa).

A Zn(2+)-binding site is contributed by Cys-36. Positions 38-48 (PTVYDYAHIGN) match the 'HIGH' region motif. Positions 221, 246, and 250 each coordinate Zn(2+). The 'KMSKS' region signature appears at 278 to 282 (KMSKS). Lys-281 contributes to the ATP binding site.

The protein belongs to the class-I aminoacyl-tRNA synthetase family. Monomer. Requires Zn(2+) as cofactor.

It localises to the cytoplasm. It catalyses the reaction tRNA(Cys) + L-cysteine + ATP = L-cysteinyl-tRNA(Cys) + AMP + diphosphate. The polypeptide is Cysteine--tRNA ligase (Chlamydia felis (strain Fe/C-56) (Chlamydophila felis)).